A 93-amino-acid chain; its full sequence is UPF0367 protein gsr3177 (93 aa).

This sequence belongs to the UPF0367 family.

This chain is UPF0367 protein gsr3177, found in Gloeobacter violaceus (strain ATCC 29082 / PCC 7421).